Reading from the N-terminus, the 159-residue chain is Endoribonuclease YbeY (159 aa).

His-125, His-129, and His-135 together coordinate Zn(2+).

Belongs to the endoribonuclease YbeY family. Requires Zn(2+) as cofactor.

The protein localises to the cytoplasm. In terms of biological role, single strand-specific metallo-endoribonuclease involved in late-stage 70S ribosome quality control and in maturation of the 3' terminus of the 16S rRNA. This chain is Endoribonuclease YbeY, found in Limosilactobacillus reuteri (strain DSM 20016) (Lactobacillus reuteri).